Here is a 102-residue protein sequence, read N- to C-terminus: Large ribosomal subunit protein uL24 (102 aa).

Belongs to the universal ribosomal protein uL24 family. As to quaternary structure, part of the 50S ribosomal subunit.

Functionally, one of two assembly initiator proteins, it binds directly to the 5'-end of the 23S rRNA, where it nucleates assembly of the 50S subunit. Its function is as follows. One of the proteins that surrounds the polypeptide exit tunnel on the outside of the subunit. This chain is Large ribosomal subunit protein uL24, found in Cupriavidus pinatubonensis (strain JMP 134 / LMG 1197) (Cupriavidus necator (strain JMP 134)).